The primary structure comprises 293 residues: 4-hydroxy-tetrahydrodipicolinate synthase (293 aa).

Pyruvate is bound at residue Thr-51. Tyr-140 serves as the catalytic Proton donor/acceptor. Lys-168 (schiff-base intermediate with substrate) is an active-site residue. Ile-209 is a binding site for pyruvate.

Belongs to the DapA family. As to quaternary structure, homotetramer; dimer of dimers.

The protein resides in the cytoplasm. The catalysed reaction is L-aspartate 4-semialdehyde + pyruvate = (2S,4S)-4-hydroxy-2,3,4,5-tetrahydrodipicolinate + H2O + H(+). Its pathway is amino-acid biosynthesis; L-lysine biosynthesis via DAP pathway; (S)-tetrahydrodipicolinate from L-aspartate: step 3/4. Its function is as follows. Catalyzes the condensation of (S)-aspartate-beta-semialdehyde [(S)-ASA] and pyruvate to 4-hydroxy-tetrahydrodipicolinate (HTPA). The sequence is that of 4-hydroxy-tetrahydrodipicolinate synthase from Streptococcus mutans serotype c (strain ATCC 700610 / UA159).